The primary structure comprises 197 residues: FMN-dependent NADH:quinone oxidoreductase (197 aa).

FMN is bound by residues Ser-10, 16 to 18 (SKS), and 96 to 99 (MYNF).

This sequence belongs to the azoreductase type 1 family. In terms of assembly, homodimer. FMN is required as a cofactor.

It carries out the reaction 2 a quinone + NADH + H(+) = 2 a 1,4-benzosemiquinone + NAD(+). The enzyme catalyses N,N-dimethyl-1,4-phenylenediamine + anthranilate + 2 NAD(+) = 2-(4-dimethylaminophenyl)diazenylbenzoate + 2 NADH + 2 H(+). Functionally, quinone reductase that provides resistance to thiol-specific stress caused by electrophilic quinones. In terms of biological role, also exhibits azoreductase activity. Catalyzes the reductive cleavage of the azo bond in aromatic azo compounds to the corresponding amines. The sequence is that of FMN-dependent NADH:quinone oxidoreductase from Marinomonas sp. (strain MWYL1).